We begin with the raw amino-acid sequence, 264 residues long: 3-methyl-2-oxobutanoate hydroxymethyltransferase (264 aa).

2 residues coordinate Mg(2+): aspartate 45 and aspartate 84. 3-methyl-2-oxobutanoate contacts are provided by residues 45–46 (DS), aspartate 84, and lysine 112. Glutamate 114 provides a ligand contact to Mg(2+). Glutamate 181 functions as the Proton acceptor in the catalytic mechanism.

This sequence belongs to the PanB family. Homodecamer; pentamer of dimers. Requires Mg(2+) as cofactor.

Its subcellular location is the cytoplasm. The enzyme catalyses 3-methyl-2-oxobutanoate + (6R)-5,10-methylene-5,6,7,8-tetrahydrofolate + H2O = 2-dehydropantoate + (6S)-5,6,7,8-tetrahydrofolate. Its pathway is cofactor biosynthesis; (R)-pantothenate biosynthesis; (R)-pantoate from 3-methyl-2-oxobutanoate: step 1/2. Catalyzes the reversible reaction in which hydroxymethyl group from 5,10-methylenetetrahydrofolate is transferred onto alpha-ketoisovalerate to form ketopantoate. This chain is 3-methyl-2-oxobutanoate hydroxymethyltransferase, found in Escherichia coli O81 (strain ED1a).